The following is a 613-amino-acid chain: UvrABC system protein C (613 aa).

Residues 29–107 (DVAGVYKMLG…IKTLKPKYNI (79 aa)) enclose the GIY-YIG domain. The UVR domain occupies 217–252 (KELQRELFDSMRKFSDNLDYESAMVYRDRLQALKSI).

It belongs to the UvrC family. Interacts with UvrB in an incision complex.

Its subcellular location is the cytoplasm. Functionally, the UvrABC repair system catalyzes the recognition and processing of DNA lesions. UvrC both incises the 5' and 3' sides of the lesion. The N-terminal half is responsible for the 3' incision and the C-terminal half is responsible for the 5' incision. This is UvrABC system protein C from Anaplasma marginale (strain St. Maries).